We begin with the raw amino-acid sequence, 199 residues long: MRILGLTGSIGMGKSTTAKLFAEAGVPVYDADAAVHQLYEGEAAPAIEAAFPGTTANGKVDRPKLSARVVHDPAAIKQLEQIVHPMLGASRQKFFADAEAANAPVVVLDIPLLFETGGEKRVDAVVVVSTSPELQRERVLARGTMDEAKLNAIIAKQTPDAEKRKRADFVVDTSHGLEPVRAQIAHILAEVVKMPQRRA.

In terms of domain architecture, DPCK spans 3 to 199 (ILGLTGSIGM…EVVKMPQRRA (197 aa)). Residue 11–16 (GMGKST) participates in ATP binding.

The protein belongs to the CoaE family.

The protein localises to the cytoplasm. The enzyme catalyses 3'-dephospho-CoA + ATP = ADP + CoA + H(+). It functions in the pathway cofactor biosynthesis; coenzyme A biosynthesis; CoA from (R)-pantothenate: step 5/5. In terms of biological role, catalyzes the phosphorylation of the 3'-hydroxyl group of dephosphocoenzyme A to form coenzyme A. In Bradyrhizobium diazoefficiens (strain JCM 10833 / BCRC 13528 / IAM 13628 / NBRC 14792 / USDA 110), this protein is Dephospho-CoA kinase.